Reading from the N-terminus, the 489-residue chain is Serine/threonine-protein kinase BSK3 (489 aa).

Glycine 2 carries the N-myristoyl glycine lipid modification. Residues 58–324 enclose the Protein kinase domain; the sequence is EYIVSEHGEK…ETEVLSHVLM (267 aa). ATP-binding positions include 64–72 and lysine 86; that span reads HGEKAPNVV. The active-site Proton acceptor is aspartate 180. The residue at position 212 (serine 212) is a Phosphoserine.

This sequence belongs to the protein kinase superfamily. Ser/Thr protein kinase family. As to quaternary structure, interacts with BRI1. In terms of processing, phosphorylated by BRI1 upon brassinolide (BL) treatment. Phosphorylated by ASK7/BIN2 and ASK9/BIL2.

The protein resides in the cell membrane. It carries out the reaction L-seryl-[protein] + ATP = O-phospho-L-seryl-[protein] + ADP + H(+). The catalysed reaction is L-threonyl-[protein] + ATP = O-phospho-L-threonyl-[protein] + ADP + H(+). Functionally, probable serine/threonine kinase that acts as a positive regulator of brassinosteroid (BR) signaling downstream of the receptor kinase BRI1. Mediates signal transduction from BRI1 by functioning as substrate of BRI1. Functions redundantly with BSK4, BSK6, BSK7 and BSK8. This is Serine/threonine-protein kinase BSK3 from Arabidopsis thaliana (Mouse-ear cress).